The primary structure comprises 526 residues: Rho guanine nucleotide exchange factor 3 (526 aa).

Residues 20–40 (ELPPASGPAKDAEEPSNKRVK) form a disordered region. A phosphoserine mark is found at Ser-47 and Ser-70. One can recognise a DH domain in the interval 122–304 (KRQEAIFELS…QGIVAEINTK (183 aa)). The 159-residue stretch at 291–449 (INIIQGIVAE…WLNCIRQAKE (159 aa)) folds into the PH domain. The segment at 464–526 (EGSFLNPTTG…GNSRHGESNV (63 aa)) is disordered. Residues 466–475 (SFLNPTTGSR) are compositionally biased toward polar residues.

As to quaternary structure, interacts with RHOA and RHOB.

The protein localises to the cytoplasm. In terms of biological role, acts as a guanine nucleotide exchange factor (GEF) for RhoA and RhoB GTPases. This Pongo abelii (Sumatran orangutan) protein is Rho guanine nucleotide exchange factor 3 (ARHGEF3).